A 483-amino-acid polypeptide reads, in one-letter code: Homoserine O-acetyltransferase (483 aa).

The AB hydrolase-1 domain occupies Asn-47–Glu-346. The active-site Nucleophile is Ser-152. Residue Arg-221 coordinates substrate. Catalysis depends on residues Asp-307 and His-340. Asp-341 contributes to the substrate binding site. CBS domains are found at residues Met-367–Ser-423 and Leu-428–Lys-483.

Belongs to the AB hydrolase superfamily. MetX family. In terms of assembly, homodimer.

It localises to the cytoplasm. The enzyme catalyses L-homoserine + acetyl-CoA = O-acetyl-L-homoserine + CoA. It functions in the pathway amino-acid biosynthesis; L-methionine biosynthesis via de novo pathway; O-acetyl-L-homoserine from L-homoserine: step 1/1. Transfers an acetyl group from acetyl-CoA to L-homoserine, forming acetyl-L-homoserine. The protein is Homoserine O-acetyltransferase of Methanohalophilus mahii (strain ATCC 35705 / DSM 5219 / SLP).